Reading from the N-terminus, the 246-residue chain is Ribonuclease PH (246 aa).

Phosphate contacts are provided by residues R91 and 129 to 131 (GTR).

It belongs to the RNase PH family. In terms of assembly, homohexameric ring arranged as a trimer of dimers.

It carries out the reaction tRNA(n+1) + phosphate = tRNA(n) + a ribonucleoside 5'-diphosphate. Its function is as follows. Phosphorolytic 3'-5' exoribonuclease that plays an important role in tRNA 3'-end maturation. Removes nucleotide residues following the 3'-CCA terminus of tRNAs; can also add nucleotides to the ends of RNA molecules by using nucleoside diphosphates as substrates, but this may not be physiologically important. Probably plays a role in initiation of 16S rRNA degradation (leading to ribosome degradation) during starvation. The chain is Ribonuclease PH from Paraburkholderia xenovorans (strain LB400).